Here is a 264-residue protein sequence, read N- to C-terminus: Glutamate racemase (264 aa).

Residues 10–11 (DS) and 42–43 (YG) each bind substrate. Cys-73 (proton donor/acceptor) is an active-site residue. A substrate-binding site is contributed by 74 to 75 (NT). Cys-183 functions as the Proton donor/acceptor in the catalytic mechanism. Residue 184 to 185 (TH) coordinates substrate.

It belongs to the aspartate/glutamate racemases family.

It carries out the reaction L-glutamate = D-glutamate. Its pathway is cell wall biogenesis; peptidoglycan biosynthesis. Its function is as follows. Provides the (R)-glutamate required for cell wall biosynthesis. The protein is Glutamate racemase of Streptococcus sanguinis (strain SK36).